Reading from the N-terminus, the 282-residue chain is ATP synthase gamma chain (282 aa).

This sequence belongs to the ATPase gamma chain family. As to quaternary structure, F-type ATPases have 2 components, CF(1) - the catalytic core - and CF(0) - the membrane proton channel. CF(1) has five subunits: alpha(3), beta(3), gamma(1), delta(1), epsilon(1). CF(0) has three main subunits: a, b and c. In this bacterium the a and b subunits are transcribed but do not seem to be translated, thus the ATP synthase consists of the alpha, beta, gamma, delta, epsilon and c subunits.

The protein resides in the cell membrane. In terms of biological role, produces ATP from ADP in the presence of a proton gradient across the membrane. The gamma chain is believed to be important in regulating ATPase activity and the flow of protons through the CF(0) complex. The protein is ATP synthase gamma chain of Moorella thermoacetica (strain ATCC 39073 / JCM 9320).